The sequence spans 484 residues: MGSNDLINEAYDDSEVVGEERESKSAWMKRWYQLLTSPLDLQLVINEKLEMINWDAYAKSLAKPLGNFLTILFFIIRLLQDNLIKPNYYKLNVKSGAFDLSKSNKLKEFDYLWEISSSFQNSNQFYAFQSWYFVTLRFLNNLFRFTIFILLSLNLYVSCKFMFGYFKTYNLFHLKKEFNSPNLTKHNLKDLSKEYYEDIYKQSLWSMLKHFFRGSRDDGPHVNQNEDEIFFQLRKWIPTNFMINLFVSFSPTAIVFLSFSDVSFTSAIAIVFHQYILDYIITKRFQRSVDDDLILSSAALQEYEDKHIMARINQCSNIDTLSSAMGTRSKTPRIFTTHSLCGEEIREVYNYEKREFEALPKMTESVPGSRETRIKDYGGISQVSDNQSHPIGFHYSPRMSPYYRDKVLDNNLAQSSSNENLEKGGAFLPNQDQNRPSKSLSPLRKTPLSARQKRFEGSEFNVLNKNDINSILRSPKKKKNYHKR.

Position 3 is a phosphoserine (serine 3). 2 helical membrane-spanning segments follow: residues 145–165 (FTIFILLSLNLYVSCKFMFGY) and 252–272 (TAIVFLSFSDVSFTSAIAIVF). Residues 416-457 (SSNENLEKGGAFLPNQDQNRPSKSLSPLRKTPLSARQKRFEG) form a disordered region. The residue at position 417 (serine 417) is a Phosphoserine. Polar residues predominate over residues 430-440 (NQDQNRPSKSL). The residue at position 474 (serine 474) is a Phosphoserine.

This sequence belongs to the NUR1 family. As to quaternary structure, interacts with CSM1.

It localises to the nucleus membrane. In terms of biological role, member of a perinuclear network that controls recombination at multiple loci to maintain genome stability. Required for rDNA repeat stability. In Saccharomyces cerevisiae (strain RM11-1a) (Baker's yeast), this protein is Nuclear rim protein 1 (NUR1).